The following is a 681-amino-acid chain: MPTTANAKRKILVTSALPYANGSIHLGHLLEYIQTDIWVRFQKSRGHECHYVCADDAHGTAIMLRAEQEGITPEQLISKVSAEHQADFARFGVAFDNYYSTHSEENRQHSERIYTALRDAGHISTRDIEQMYDPVKGLFLADRFIKGTCPKCGAGDQYGDNCEACGATYTPAELIDPVSAISGATPEVRSSTHFFFKLPDFADFMQGWIDGGHVQPQIRNKLLEWFESGFNEWDISRDAPYFGFEIPDAPGKYFYVWLDAPIGYLASFQNLCEREGIDFDSYWRRDSDAEVYHFIGKDIVYFHALFWPAMLEGAGLRTPTGVNCHGFVTVNGAKMSKSRGTFIKAQTYAEYLNPEYLRYYFAAKLTAGVDDLDLNLEDFASRVNADLVGKVVNIASRCAGFVKKLGAGRLAAHCAEPELVTRFVEAGEAIAADYEAREFARAMRKVMDLADEANAYIADKAPWVLAKEEGREQEVLDICSVGINLFRILMVYLQPVVPAMAEQARDFLQIESLDWESRRTLLEDHAIAKFKPLMTRVDTDKIASMTEASKEVLAEEQKLKEQAKGPLADDPIADEIGFDDFAKLDLRIVRIAKAEYVEGAKKLLKLTLDLGGETRTVFSGIRAVYAPEALEGRLTVMVANLAPRKMRFGVSEGMVLAAGDKEGGIYLLSPDNGAEPGQRVS.

Positions 18–28 match the 'HIGH' region motif; the sequence is PYANGSIHLGH. Cys-149, Cys-152, Cys-162, and Cys-165 together coordinate Zn(2+). The 'KMSKS' region signature appears at 334 to 338; it reads KMSKS. Position 337 (Lys-337) interacts with ATP. The 102-residue stretch at 580–681 folds into the tRNA-binding domain; it reads DFAKLDLRIV…NGAEPGQRVS (102 aa).

This sequence belongs to the class-I aminoacyl-tRNA synthetase family. MetG type 1 subfamily. In terms of assembly, homodimer. It depends on Zn(2+) as a cofactor.

The protein resides in the cytoplasm. The catalysed reaction is tRNA(Met) + L-methionine + ATP = L-methionyl-tRNA(Met) + AMP + diphosphate. Functionally, is required not only for elongation of protein synthesis but also for the initiation of all mRNA translation through initiator tRNA(fMet) aminoacylation. The protein is Methionine--tRNA ligase of Chromohalobacter salexigens (strain ATCC BAA-138 / DSM 3043 / CIP 106854 / NCIMB 13768 / 1H11).